A 113-amino-acid chain; its full sequence is Large ribosomal subunit protein uL24 (113 aa).

Belongs to the universal ribosomal protein uL24 family. In terms of assembly, part of the 50S ribosomal subunit.

Functionally, one of two assembly initiator proteins, it binds directly to the 5'-end of the 23S rRNA, where it nucleates assembly of the 50S subunit. One of the proteins that surrounds the polypeptide exit tunnel on the outside of the subunit. The chain is Large ribosomal subunit protein uL24 from Micrococcus luteus (Micrococcus lysodeikticus).